Reading from the N-terminus, the 449-residue chain is Biotin carboxylase (449 aa).

Residues 1–445 enclose the Biotin carboxylation domain; that stretch reads MLDKIVIANR…NIHYLEKKLG (445 aa). Residues lysine 116, lysine 159, 165–166, 201–204, histidine 209, and histidine 236 contribute to the ATP site; these read GG and EKYL. The 198-residue stretch at 120 to 317 folds into the ATP-grasp domain; it reads IAAMKKAGVP…LIKEQLRIAA (198 aa). Lysine 238 contributes to the hydrogencarbonate binding site. Residues glutamate 276 and glutamate 288 each coordinate ATP. Mg(2+) contacts are provided by glutamate 276, glutamate 288, and asparagine 290. Residues glutamate 276, glutamate 288, and asparagine 290 each contribute to the Mn(2+) site. Hydrogencarbonate-binding residues include arginine 292, valine 295, and arginine 338. Arginine 292 is an active-site residue. Arginine 338 serves as a coordination point for biotin.

Acetyl-CoA carboxylase is a heterohexamer of biotin carboxyl carrier protein, biotin carboxylase and the two subunits of carboxyl transferase in a 2:2 complex. It depends on Mg(2+) as a cofactor. Requires Mn(2+) as cofactor.

The enzyme catalyses N(6)-biotinyl-L-lysyl-[protein] + hydrogencarbonate + ATP = N(6)-carboxybiotinyl-L-lysyl-[protein] + ADP + phosphate + H(+). Its pathway is lipid metabolism; malonyl-CoA biosynthesis; malonyl-CoA from acetyl-CoA: step 1/1. Functionally, this protein is a component of the acetyl coenzyme A carboxylase complex; first, biotin carboxylase catalyzes the carboxylation of the carrier protein and then the transcarboxylase transfers the carboxyl group to form malonyl-CoA. The protein is Biotin carboxylase (accC) of Escherichia coli O157:H7.